A 504-amino-acid chain; its full sequence is Activin receptor type-1-like (504 aa).

Residues 1–20 (MTLGIFRRVFLMLSVALGLT) form the signal peptide. Residues 21–121 (KGDLVKPSRG…EEPEVDAHLP (101 aa)) are Extracellular-facing. Asn34 is a glycosylation site (N-linked (GlcNAc...) asparagine). 3 disulfide bridges follow: Cys35/Cys52, Cys37/Cys42, and Cys47/Cys70. Positions 74-77 (NQEL) are mediates specificity for BMP ligand. Intrachain disulfides connect Cys78–Cys90 and Cys91–Cys96. An N-linked (GlcNAc...) asparagine glycan is attached at Asn99. The chain crosses the membrane as a helical span at residues 122-142 (LILGPVLALLVLVALGTLGLW). The Cytoplasmic portion of the chain corresponds to 143–504 (RVRRRQEKQR…QNPEKPKVIH (362 aa)). Phosphoserine occurs at positions 156, 161, and 162. Positions 173-202 (SMLGDFLVSDCTTGSGSGLPFLVQRTVARQ) constitute a GS domain. Residues 203 to 504 (VALVECVGKG…QNPEKPKVIH (302 aa)) enclose the Protein kinase domain. ATP is bound by residues 209-217 (VGKGRYGEV) and Lys230. Asp331 functions as the Proton acceptor in the catalytic mechanism.

It belongs to the protein kinase superfamily. TKL Ser/Thr protein kinase family. TGFB receptor subfamily. In terms of assembly, interacts with TSC22D1/TSC-22. It depends on Mg(2+) as a cofactor. Mn(2+) serves as cofactor. As to expression, urogenital ridge, testis, ovary, brain and lung. In lung, found exclusively in pulmonary vessels of all sizes. Also expressed in aorta, vena cava and certain blood vessels of kidney, spleen, heart and intestine. For most blood vessels, a higher level of expression is found in endothelium than in adjacent smooth muscle.

Its subcellular location is the cell membrane. The catalysed reaction is L-threonyl-[receptor-protein] + ATP = O-phospho-L-threonyl-[receptor-protein] + ADP + H(+). The enzyme catalyses L-seryl-[receptor-protein] + ATP = O-phospho-L-seryl-[receptor-protein] + ADP + H(+). Functionally, type I receptor for TGF-beta family ligands BMP9/GDF2 and BMP10 and important regulator of normal blood vessel development. On ligand binding, forms a receptor complex consisting of two type II and two type I transmembrane serine/threonine kinases. Type II receptors phosphorylate and activate type I receptors which autophosphorylate, then bind and activate SMAD transcriptional regulators. May bind activin as well. This chain is Activin receptor type-1-like (Acvrl1), found in Rattus norvegicus (Rat).